The sequence spans 323 residues: Aldo-keto reductase family 1 member C3 (323 aa).

NADP(+) is bound by residues 20-24 and Asp-50; that span reads GFGTY. The active-site Proton donor is Tyr-55. Position 117 (His-117) interacts with substrate. NADP(+) is bound by residues 166-167, Gln-190, 216-221, and 270-280; these read SN, YSALGS, and KSYNEQRIREN.

It belongs to the aldo/keto reductase family.

The protein resides in the cytoplasm. The catalysed reaction is a 3alpha-hydroxysteroid + NADP(+) = a 3-oxosteroid + NADPH + H(+). The enzyme catalyses a 3alpha-hydroxysteroid + NAD(+) = a 3-oxosteroid + NADH + H(+). It carries out the reaction prostaglandin F2alpha + NADP(+) = prostaglandin D2 + NADPH + H(+). It catalyses the reaction testosterone + NAD(+) = androst-4-ene-3,17-dione + NADH + H(+). The catalysed reaction is testosterone + NADP(+) = androst-4-ene-3,17-dione + NADPH + H(+). The enzyme catalyses prostaglandin F2alpha + NADP(+) = prostaglandin H2 + NADPH + H(+). It carries out the reaction prostaglandin D2 + NADPH + H(+) = 11beta-prostaglandin F2 + NADP(+). It catalyses the reaction prostaglandin D2-ethanolamide + NADPH + H(+) = 11beta-prostaglandin F2-ethanolamide + NADP(+). The catalysed reaction is 17beta-estradiol + NADP(+) = estrone + NADPH + H(+). The enzyme catalyses 17beta-estradiol + NAD(+) = estrone + NADH + H(+). It carries out the reaction (20S)-hydroxypregn-4-en-3-one + NADP(+) = progesterone + NADPH + H(+). It catalyses the reaction (20S)-hydroxypregn-4-en-3-one + NAD(+) = progesterone + NADH + H(+). The catalysed reaction is 5alpha-androstane-3alpha,17beta-diol + NADP(+) = 17beta-hydroxy-5alpha-androstan-3-one + NADPH + H(+). The enzyme catalyses 5alpha-androstane-3alpha,17beta-diol + NAD(+) = 17beta-hydroxy-5alpha-androstan-3-one + NADH + H(+). It carries out the reaction androsterone + NADPH + H(+) = 5alpha-androstane-3alpha,17beta-diol + NADP(+). It catalyses the reaction 5alpha-androstane-3alpha,17beta-diol + NAD(+) = androsterone + NADH + H(+). The catalysed reaction is 5alpha-androstane-3beta,17beta-diol + NADP(+) = 17beta-hydroxy-5alpha-androstan-3-one + NADPH + H(+). The enzyme catalyses 9-cis-retinol + NADP(+) = 9-cis-retinal + NADPH + H(+). The protein operates within steroid metabolism. Cytosolic aldo-keto reductase that catalyzes the NADH and NADPH-dependent reduction of ketosteroids to hydroxysteroids. Acts as a NAD(P)(H)-dependent 3-, 17- and 20-ketosteroid reductase on the steroid nucleus and side chain and regulates the metabolism of androgens, estrogens and progesterone. Displays the ability to catalyze both oxidation and reduction in vitro, but most probably acts as a reductase in vivo since the oxidase activity measured in vitro is inhibited by physiological concentration of NADPH. Acts preferentially as a 17-ketosteroid reductase and has the highest catalytic efficiency of the AKR1C enzyme for the reduction of delta4-androstenedione to form testosterone. Reduces prostaglandin (PG) D2 to 11beta-prostaglandin F2, progesterone to 20alpha-hydroxyprogesterone and estrone to 17beta-estradiol. Catalyzes the transformation of the potent androgen dihydrotestosterone (DHT) into the less active form, 5-alpha-androstan-3-alpha,17-beta-diol (3-alpha-diol). Also displays retinaldehyde reductase activity toward 9-cis-retinal. In Pongo abelii (Sumatran orangutan), this protein is Aldo-keto reductase family 1 member C3 (AKR1C3).